Consider the following 141-residue polypeptide: Hemoglobin subunit alpha-A (141 aa).

The Globin domain occupies 1 to 141 (MLSASDKANV…VGLVLTAKYR (141 aa)). Position 58 (His58) interacts with O2. Position 87 (His87) interacts with heme b.

Belongs to the globin family. In terms of assembly, there are three forms of hemoglobin in Sphenodon: A, A' and D. Hb A is a tetramer of two alpha-A and two beta-1, Hb A' is a tetramer of two alpha-a and two beta-2, Hb D is a tetramer of two alpha-D and two beta-2. In terms of tissue distribution, red blood cells.

In terms of biological role, involved in oxygen transport from the lung to the various peripheral tissues. The protein is Hemoglobin subunit alpha-A (HBAA) of Sphenodon punctatus (Tuatara).